The following is a 1612-amino-acid chain: DNA topoisomerase 2-beta (1612 aa).

The residue at position 2 (A2) is an N-acetylalanine. An N6-acetyllysine modification is found at K3. Glycyl lysine isopeptide (Lys-Gly) (interchain with G-Cter in SUMO2) cross-links involve residues K21 and K22. ATP-binding positions include N100, N129, and 157-159 (SSN). Residues K165 and K166 each participate in a glycyl lysine isopeptide (Lys-Gly) (interchain with G-Cter in SUMO2) cross-link. 170–177 (GRNGYGAK) is an ATP binding site. Residues K216 and K287 each participate in a glycyl lysine isopeptide (Lys-Gly) (interchain with G-Cter in SUMO2) cross-link. Positions 351–353 (KKK) are interaction with DNA. Residues K355 and K361 each participate in a glycyl lysine isopeptide (Lys-Gly) (interchain with G-Cter in SUMO2) cross-link. 385–387 (QTK) is an ATP binding site. Residues K425, K427, and K434 each participate in a glycyl lysine isopeptide (Lys-Gly) (interchain with G-Cter in SUMO2) cross-link. The Toprim domain maps to 464-581 (CTLILTEGDS…SLLKHGFLEE (118 aa)). Residues E470, D550, and D552 each contribute to the Mg(2+) site. Residues K588, K593, K623, K631, K634, K664, and K700 each participate in a glycyl lysine isopeptide (Lys-Gly) (interchain with G-Cter in SUMO2) cross-link. The Topo IIA-type catalytic domain maps to 724–1177 (IPSLVDGFKP…SPSDLWKEDL (454 aa)). Catalysis depends on Y814, which acts as the O-(5'-phospho-DNA)-tyrosine intermediate. The interval 999 to 1008 (KLQTTLTCNS) is interaction with DNA. A Glycyl lysine isopeptide (Lys-Gly) (interchain with G-Cter in SUMO2) cross-link involves residue K1080. Residues 1098–1128 (AWKEAQEKAAEEEDSQNQHDDSSSDSGTPSG) are disordered. Residues K1202, K1205, K1214, and K1215 each participate in a glycyl lysine isopeptide (Lys-Gly) (interchain with G-Cter in SUMO2) cross-link. At S1224 the chain carries Phosphoserine. Residues K1238, K1250, and K1259 each participate in a glycyl lysine isopeptide (Lys-Gly) (interchain with G-Cter in SUMO2) cross-link. Residues 1245–1586 (LLKKKKGDPD…FTSEPPALPR (342 aa)) are disordered. T1280 carries the post-translational modification Phosphothreonine. Residues K1311 and K1315 each participate in a glycyl lysine isopeptide (Lys-Gly) (interchain with G-Cter in SUMO2) cross-link. 2 stretches are compositionally biased toward basic and acidic residues: residues 1322-1332 (PWSDDESKSES) and 1346-1358 (SLLRRAAAERPKY). Residues S1324, S1328, S1330, S1332, and S1346 each carry the phosphoserine modification. A Phosphotyrosine modification is found at Y1358. Over residues 1362–1379 (FSEEEDDDAAAADDSNDL) the composition is skewed to acidic residues. A phosphoserine mark is found at S1363 and S1376. Residue K1385 forms a Glycyl lysine isopeptide (Lys-Gly) (interchain with G-Cter in SUMO2) linkage. S1387 is subject to Phosphoserine. A Phosphothreonine modification is found at T1390. S1400 carries the phosphoserine modification. Y1408 bears the Phosphotyrosine mark. S1411 is modified (phosphoserine). Basic and acidic residues predominate over residues 1417 to 1429 (ATPEKSSNDKKSQ). A Glycyl lysine isopeptide (Lys-Gly) (interchain with G-Cter in SUMO2) cross-link involves residue K1427. A phosphoserine mark is found at S1428, S1439, and S1441. Residue K1443 forms a Glycyl lysine isopeptide (Lys-Gly) (interchain with G-Cter in SUMO2) linkage. The span at 1443–1453 (KSEDDSAKFDS) shows a compositional bias: basic and acidic residues. A phosphoserine mark is found at S1448, S1453, and S1460. K1477 is covalently cross-linked (Glycyl lysine isopeptide (Lys-Gly) (interchain with G-Cter in SUMO2)). Positions 1493–1499 (KAKRAPK) are interaction with PLSCR1. Phosphoserine is present on residues S1509, S1511, and S1513. Positions 1526–1536 (GKGRGAKKRKA) are enriched in basic residues. S1537 and S1539 each carry phosphoserine. Residues 1550-1561 (KPSKTASKKPKK) are compositionally biased toward basic residues. A Phosphothreonine modification is found at T1562. A phosphoserine mark is found at S1563 and S1568. A Phosphotyrosine modification is found at Y1596. A Phosphoserine modification is found at S1600.

The protein belongs to the type II topoisomerase family. As to quaternary structure, homodimer. Interacts with KIAA1210. Interacts with PLSCR1. The cofactor is Mg(2+). It depends on Mn(2+) as a cofactor. Ca(2+) is required as a cofactor.

Its subcellular location is the nucleus. The protein resides in the nucleolus. The protein localises to the nucleoplasm. It carries out the reaction ATP-dependent breakage, passage and rejoining of double-stranded DNA.. Its function is as follows. Key decatenating enzyme that alters DNA topology by binding to two double-stranded DNA molecules, generating a double-stranded break in one of the strands, passing the intact strand through the broken strand, and religating the broken strand. Plays a role in B-cell differentiation. This is DNA topoisomerase 2-beta (Top2b) from Mus musculus (Mouse).